Consider the following 473-residue polypeptide: Probable glycine dehydrogenase (decarboxylating) subunit 2 (473 aa).

A disordered region spans residues 1-40; it reads MEHYEQARYAPAEGETNEPLLSENDQTTVSVDPSLPDDLT. Position 270 is an N6-(pyridoxal phosphate)lysine (K270).

The protein belongs to the GcvP family. C-terminal subunit subfamily. As to quaternary structure, the glycine cleavage system is composed of four proteins: P, T, L and H. In this organism, the P 'protein' is a heterodimer of two subunits. The cofactor is pyridoxal 5'-phosphate.

The enzyme catalyses N(6)-[(R)-lipoyl]-L-lysyl-[glycine-cleavage complex H protein] + glycine + H(+) = N(6)-[(R)-S(8)-aminomethyldihydrolipoyl]-L-lysyl-[glycine-cleavage complex H protein] + CO2. Its function is as follows. The glycine cleavage system catalyzes the degradation of glycine. The P protein binds the alpha-amino group of glycine through its pyridoxal phosphate cofactor; CO(2) is released and the remaining methylamine moiety is then transferred to the lipoamide cofactor of the H protein. The sequence is that of Probable glycine dehydrogenase (decarboxylating) subunit 2 from Halobacterium salinarum (strain ATCC 700922 / JCM 11081 / NRC-1) (Halobacterium halobium).